The sequence spans 134 residues: UPF0412 protein YaaI (134 aa).

An N-terminal signal peptide occupies residues 1-23 (MKSVFTISASLAISLMLCCTAQA).

This sequence belongs to the UPF0412 family.

The sequence is that of UPF0412 protein YaaI from Escherichia coli O157:H7.